The following is a 305-amino-acid chain: Auxin-responsive protein IAA27 (305 aa).

Residues 45 to 49 (LRLGL) carry the EAR-like (transcriptional repression) motif. Disordered regions lie at residues 96–119 (TTATGDVGSGSGPRTSVVKDGKST) and 155–180 (KNSMASSQSQKPGNNSETEEAEAKSG). Residues 155 to 170 (KNSMASSQSQKPGNNS) are compositionally biased toward polar residues. The PB1 domain occupies 185-287 (CLYVKVSMEG…SCKKLRIMKS (103 aa)).

The protein belongs to the Aux/IAA family. Homodimers and heterodimers. Interacts with phytochrome A. Interacts with TPL.

Its subcellular location is the nucleus. In terms of biological role, aux/IAA proteins are short-lived transcriptional factors that function as repressors of early auxin response genes at low auxin concentrations. Repression is thought to result from the interaction with auxin response factors (ARFs), proteins that bind to the auxin-responsive promoter element (AuxRE). Formation of heterodimers with ARF proteins may alter their ability to modulate early auxin response genes expression. This Arabidopsis thaliana (Mouse-ear cress) protein is Auxin-responsive protein IAA27 (IAA27).